Here is a 445-residue protein sequence, read N- to C-terminus: Peptide chain release factor 1, mitochondrial (445 aa).

The N-terminal 61 residues, 1–61 (MNRHLCVWLF…LLSKNWSRRY (61 aa)), are a transit peptide targeting the mitochondrion. The GGQ domain stretch occupies residues 297 to 361 (PKDLRIDTFR…LRARLYQQII (65 aa)). Residues 311-313 (GGQ) carry the GGQ motif. Q313 carries the post-translational modification N5-methylglutamine.

This sequence belongs to the prokaryotic/mitochondrial release factor family. In terms of processing, methylation of glutamine in the GGQ triplet by HEMK1 is conserved from bacteria to mammals.

It localises to the mitochondrion. In terms of biological role, mitochondrial peptide chain release factor that directs the termination of translation in response to the peptide chain non-canonical stop codons AGG and AGA. Non-canonical termination codons AGG and AGA are found at the end of MT-CO1/COX1 and MT-ND6/ND6 open reading frames, respectively. Recognizes non-canonical stop codons via a network of interactions between the codon, MTRF1 and the ribosomal RNA (rRNA): in contrast to other translation release factors, which identify the codon in the A-site via direct interactions of amino acid side chains with the bases, MTRF1 repositions the first 2 bases of the stop codon to use an intricate network of interactions that includes residues of the release factor, the rRNA of the small ribosomal subunit, as well as neighboring bases of the mRNA. The protein is Peptide chain release factor 1, mitochondrial of Homo sapiens (Human).